Consider the following 109-residue polypeptide: A-type ATP synthase subunit F (109 aa).

It belongs to the V-ATPase F subunit family. In terms of assembly, has multiple subunits with at least A(3), B(3), C, D, E, F, H, I and proteolipid K(x).

The protein resides in the cell membrane. Its function is as follows. Component of the A-type ATP synthase that produces ATP from ADP in the presence of a proton gradient across the membrane. This Haloquadratum walsbyi (strain DSM 16790 / HBSQ001) protein is A-type ATP synthase subunit F.